We begin with the raw amino-acid sequence, 210 residues long: Calcium-activated potassium channel subunit beta-4 (210 aa).

Residues 1–19 (MAKLRVSYEYTEAEDKSIR) are Cytoplasmic-facing. Residues 20-40 (LGLFLIVSGILSLFIFGFCWL) traverse the membrane as a helical segment. Residues 41–167 (SPALQDLQAT…DVLLQRTHDE (127 aa)) are Extracellular-facing. N-linked (GlcNAc...) asparagine glycans are attached at residues Asn-53 and Asn-90. Residues 168-188 (IVLLHCFLWPVVAFVVGVLIV) form a helical membrane-spanning segment. Over 189–210 (VLTICAKSLAVKAEAMKKRKFS) the chain is Cytoplasmic.

Belongs to the KCNMB (TC 8.A.14.1) family. KCNMB4 subfamily. Interacts with KCNMA1 tetramer. There are probably 4 molecules of KCMNB4 per KCNMA1 tetramer. Interacts with FMR1 (via N-terminus). Phosphorylated. Phosphorylation modulates its effect on KCNMA1 activation kinetics. Post-translationally, N-glycosylated. A highly glycosylated form is promoted by KCNMA1. Glycosylation, which is not required for the interaction with KCNMA1 and subcellular location, increases protection against charybdotoxin.

It localises to the membrane. Its function is as follows. Regulatory subunit of the calcium activated potassium KCNMA1 (maxiK) channel. Modulates the calcium sensitivity and gating kinetics of KCNMA1, thereby contributing to KCNMA1 channel diversity. Decreases the gating kinetics and calcium sensitivity of the KCNMA1 channel, but with fast deactivation kinetics. May decrease KCNMA1 channel openings at low calcium concentrations but increases channel openings at high calcium concentrations. Makes KCNMA1 channel resistant to 100 nM charybdotoxin (CTX) toxin concentrations. The polypeptide is Calcium-activated potassium channel subunit beta-4 (Kcnmb4) (Rattus norvegicus (Rat)).